The chain runs to 117 residues: Minor capsid protein p17 (117 aa).

A glycan (N-linked (GlcNAc...) asparagine; by host) is linked at asparagine 12. A helical transmembrane segment spans residues 39 to 59 (AILLGILILLVIILIIVAIVY). 2 N-linked (GlcNAc...) asparagine; by host glycosylation sites follow: asparagine 61 and asparagine 97.

Belongs to the asfivirus minor capsid protein p17 family. In terms of assembly, interacts with the minor capsid protein M1249L and with the hexon capsid protein p72 capsomers; these interactions form a rigid zipper structure that stabilizes the capsomers. Interacts with host STING1.

It is found in the virion membrane. The protein resides in the host endoplasmic reticulum membrane. The protein localises to the host Golgi apparatus membrane. In terms of biological role, together with the penton and the other minor capsid proteins (M1249L, p49), forms a complicated network immediately below the outer capsid shell, stabilizing the whole capsid. Three copies of p17 encircle each p72 capsomer in the inner capsid shell, anchoring p72 capsomers on the inner membrane. Required for the assembly of the capsid and icosahedral morphogenesis. Additionally, inhibits the host cGAS-STING pathway through its interaction with STING1 and subsequent interference of the recruitment of downstream components TBK1 and IKBKE. The sequence is that of Minor capsid protein p17 from African swine fever virus (strain Badajoz 1971 Vero-adapted) (Ba71V).